Here is a 512-residue protein sequence, read N- to C-terminus: Matrix metalloproteinase-27 (512 aa).

The signal sequence occupies residues 1–17 (MKSFLLLFLLFVTFSSA). Positions 18–98 (LPADQKMENE…PRCGVPDVGQ (81 aa)) are cleaved as a propeptide — activation peptide. Positions 89–96 (PRCGVPDV) match the Cysteine switch motif. Cysteine 91 lines the Zn(2+) pocket. Residue asparagine 110 is glycosylated (N-linked (GlcNAc...) asparagine). Aspartate 121 and aspartate 155 together coordinate Ca(2+). Zn(2+) is bound at residue histidine 165. Residues aspartate 173, glycine 174, and valine 178 each contribute to the Ca(2+) site. Histidine 181 serves as a coordination point for Zn(2+). 2 residues coordinate Ca(2+): glycine 188 and aspartate 192. Histidine 194 is a binding site for Zn(2+). Ca(2+)-binding residues include aspartate 196 and glutamate 199. Histidine 216 serves as a coordination point for Zn(2+). The active site involves glutamate 217. Positions 220 and 226 each coordinate Zn(2+). Hemopexin repeat units follow at residues 276-325 (PHAC…WPSL), 326-371 (PADL…GFPR), 373-421 (VKKI…FPGI), and 422-465 (GLRV…WFQC). Cysteine 279 and cysteine 465 are joined by a disulfide. Aspartate 286 is a binding site for Ca(2+). Ca(2+) contacts are provided by aspartate 377 and aspartate 426. The required for retention in the endoplasmic reticulum stretch occupies residues 466 to 512 (KEPLNSSLDFHFNQEKAYSGEVETLHHQSLSLLIFGIVHLLNKICSY).

It belongs to the peptidase M10A family. Requires Ca(2+) as cofactor. Zn(2+) is required as a cofactor. Post-translationally, N-glycosylated.

It localises to the endoplasmic reticulum. Its function is as follows. Matrix metalloproteinases degrade protein components of the extracellular matrix such as fibronectin, laminin, gelatins and/or collagens. This chain is Matrix metalloproteinase-27 (MMP27), found in Tupaia belangeri (Common tree shrew).